An 83-amino-acid chain; its full sequence is Three-finger toxin MALT0058C (83 aa).

An N-terminal signal peptide occupies residues 1–21 (MKTLLLTLVVVTIVCLDFGHT). 4 cysteine pairs are disulfide-bonded: Cys-24/Cys-45, Cys-38/Cys-62, Cys-64/Cys-75, and Cys-76/Cys-81.

Belongs to the three-finger toxin family. Short-chain subfamily. Type I alpha-neurotoxin sub-subfamily. As to expression, expressed by the venom gland.

It localises to the secreted. Binds to muscle nicotinic acetylcholine receptor (nAChR) and inhibits acetylcholine from binding to the receptor, thereby impairing neuromuscular transmission. This chain is Three-finger toxin MALT0058C, found in Micrurus altirostris (Uruguayan coral snake).